Consider the following 163-residue polypeptide: Nodulin-13 (163 aa).

Positions 68 and 82 each coordinate kinetin. Positions 68 and 82 each coordinate N(6)-dimethylallyladenine. Q68, Y82, and Y133 together coordinate trans-zeatin.

Belongs to the BetVI family. As to quaternary structure, homodimer. As to expression, expressed in nodules, but not in leaves, stems, flowers and roots. Specifically located in the nodule cortex.

In terms of biological role, may be involved in nodule organogenesis rather in the processes related to nitrogen fixation or interactions with the bacteria. May regulate nodulation by controlling the levels of freely available cytokinins. The protein is Nodulin-13 (N13) of Medicago truncatula (Barrel medic).